Consider the following 261-residue polypeptide: Protein OSB1, mitochondrial (261 aa).

The N-terminal 28 residues, 1-28, are a transit peptide targeting the mitochondrion; that stretch reads MNTFFKLGSLIQRTASQISSSFPKSRFF. Residues 55–155 enclose the SSB domain; it reads VNSVSLMGFV…VKVAEVNYVA (101 aa). A PDF region region spans residues 189 to 238; sequence WQVFFSNPYDWWDNRRNKKNPKQPDFKHKDTGEALWLCSDLPDWITRRLE.

As to expression, expressed in root elongation zone and in gametophytic cells.

The protein resides in the mitochondrion. Functionally, regulates mitochondrial DNA recombination. Represses homologous recombination, preventing mitochondrial genome instability and unbalanced transmission of alternative mtDNA configurations. Binds preferentially single-stranded DNA. Does not bind to RNA. The polypeptide is Protein OSB1, mitochondrial (OSB1) (Arabidopsis thaliana (Mouse-ear cress)).